Reading from the N-terminus, the 580-residue chain is MLLQPLLLLLLPALLQSAQRYDQTPLDASSYYRSDLTGSSASSLDGFPHHNRCEPITISICKNIPYNMTIMPNLIGHTKQEEAGLEVHQFAPLVKIGCSADLQLFLCSLYVPVCTILERPIPPCRSLCESARVCETLMKTYNFNWPENLECSKFPVHGGEDLCVAENTTASSSTPAPTRSAPKVTTRKHQISVDSPHRNIGFVCPVQLKTPLGMGYELKVGGKDLHDCGAPCHAMFFPERERTVLRYWVGSWAAICVASCLFTVLTFLIDSSRFRYPERAIVFLAVCYLVVGCAYVAGLGAGDSVSCREPFPPPVKLGRLQMMSTITQGHRQTTACTVLFMALYFCCMAAFAWWSCLAFAWFLAAGLKWGHEAIENKSHLFHLVAWAVPALQTISVLALAKVEGDILSGVCFVGQLDTHSLGGFLILPLCIYLSIGALFLLAGFISLFRIRTVMKTDGKRTDKLERLMLRIGFFSGLFILPALGLLGCLFYEYYNFDEWMIQWHRDICKPFSIPCPAARPPGTPEARPIFQIYMVKYLCSMLVGVTSSVWLYSSKTMVSWRNFVERLQGKEPRTRAQAYV.

The first 17 residues, 1-17 (MLLQPLLLLLLPALLQS), serve as a signal peptide directing secretion. Residues 18 to 248 (AQRYDQTPLD…ERERTVLRYW (231 aa)) are Extracellular-facing. The FZ domain maps to 48-166 (PHHNRCEPIT…HGGEDLCVAE (119 aa)). Cystine bridges form between Cys-53–Cys-114, Cys-61–Cys-107, Cys-98–Cys-134, Cys-124–Cys-163, and Cys-128–Cys-151. N-linked (GlcNAc...) asparagine glycosylation occurs at Asn-67. N-linked (GlcNAc...) asparagine glycosylation is present at Asn-167. Residues 249–269 (VGSWAAICVASCLFTVLTFLI) form a helical membrane-spanning segment. Residues 270–279 (DSSRFRYPER) are Cytoplasmic-facing. A helical membrane pass occupies residues 280-300 (AIVFLAVCYLVVGCAYVAGLG). Topologically, residues 301–342 (AGDSVSCREPFPPPVKLGRLQMMSTITQGHRQTTACTVLFMA) are extracellular. Residues 343–363 (LYFCCMAAFAWWSCLAFAWFL) traverse the membrane as a helical segment. Topologically, residues 364–379 (AAGLKWGHEAIENKSH) are cytoplasmic. A helical transmembrane segment spans residues 380–400 (LFHLVAWAVPALQTISVLALA). Over 401 to 424 (KVEGDILSGVCFVGQLDTHSLGGF) the chain is Extracellular. A helical transmembrane segment spans residues 425–445 (LILPLCIYLSIGALFLLAGFI). Over 446 to 470 (SLFRIRTVMKTDGKRTDKLERLMLR) the chain is Cytoplasmic. Residues 471–491 (IGFFSGLFILPALGLLGCLFY) traverse the membrane as a helical segment. At 492 to 531 (EYYNFDEWMIQWHRDICKPFSIPCPAARPPGTPEARPIFQ) the chain is on the extracellular side. The helical transmembrane segment at 532-552 (IYMVKYLCSMLVGVTSSVWLY) threads the bilayer. The Cytoplasmic portion of the chain corresponds to 553-580 (SSKTMVSWRNFVERLQGKEPRTRAQAYV). The Lys-Thr-X-X-X-Trp motif, mediates interaction with the PDZ domain of Dvl family members signature appears at 555–560 (KTMVSW). The PDZ-binding motif lies at 578-580 (AYV).

Belongs to the G-protein coupled receptor Fz/Smo family.

The protein localises to the cell membrane. In terms of biological role, receptor for Wnt proteins. Most of frizzled receptors are coupled to the beta-catenin canonical signaling pathway, which leads to the activation of disheveled proteins, inhibition of GSK-3 kinase, nuclear accumulation of beta-catenin and activation of Wnt target genes. A second signaling pathway involving PKC and calcium fluxes has been seen for some family members, but it is not yet clear if it represents a distinct pathway or if it can be integrated in the canonical pathway, as PKC seems to be required for Wnt-mediated inactivation of GSK-3 kinase. Both pathways seem to involve interactions with G-proteins. Required to coordinate the cytoskeletons of epidermal cells to produce a parallel array of cuticular hairs and bristles. This Drosophila virilis (Fruit fly) protein is Frizzled (fz).